Consider the following 142-residue polypeptide: Translation initiation factor 2 subunit beta (142 aa).

The protein belongs to the eIF-2-beta/eIF-5 family. In terms of assembly, heterotrimer composed of an alpha, a beta and a gamma chain.

Functionally, eIF-2 functions in the early steps of protein synthesis by forming a ternary complex with GTP and initiator tRNA. The protein is Translation initiation factor 2 subunit beta of Staphylothermus marinus (strain ATCC 43588 / DSM 3639 / JCM 9404 / F1).